Here is a 473-residue protein sequence, read N- to C-terminus: ATP synthase subunit beta (473 aa).

153 to 160 (GGAGVGKT) contacts ATP.

This sequence belongs to the ATPase alpha/beta chains family. As to quaternary structure, F-type ATPases have 2 components, CF(1) - the catalytic core - and CF(0) - the membrane proton channel. CF(1) has five subunits: alpha(3), beta(3), gamma(1), delta(1), epsilon(1). CF(0) has three main subunits: a(1), b(2) and c(9-12). The alpha and beta chains form an alternating ring which encloses part of the gamma chain. CF(1) is attached to CF(0) by a central stalk formed by the gamma and epsilon chains, while a peripheral stalk is formed by the delta and b chains.

It localises to the cell inner membrane. The enzyme catalyses ATP + H2O + 4 H(+)(in) = ADP + phosphate + 5 H(+)(out). In terms of biological role, produces ATP from ADP in the presence of a proton gradient across the membrane. The catalytic sites are hosted primarily by the beta subunits. This chain is ATP synthase subunit beta, found in Rickettsia massiliae (strain Mtu5).